We begin with the raw amino-acid sequence, 213 residues long: Putative manganese efflux pump MntP (213 aa).

The next 6 helical transmembrane spans lie at 3–23, 36–56, 67–87, 130–150, 152–172, and 187–207; these read ILSI…VSVA, ALKV…IGWG, AFDH…MIFE, LAIA…FLGI, IVQT…LGVI, and IVGG…HTGI.

This sequence belongs to the MntP (TC 9.B.29) family.

The protein resides in the cell membrane. In terms of biological role, probably functions as a manganese efflux pump. In Clostridium perfringens (strain ATCC 13124 / DSM 756 / JCM 1290 / NCIMB 6125 / NCTC 8237 / Type A), this protein is Putative manganese efflux pump MntP.